An 882-amino-acid polypeptide reads, in one-letter code: Bifunctional heparan sulfate N-deacetylase/N-sulfotransferase 1 (882 aa).

The Cytoplasmic segment spans residues 1–17; that stretch reads MPALACLRRLCRHVSPQ. The interval 1–169 is sufficient for localization to Golgi membrane; that stretch reads MPALACLRRL…VAYGVGIIGF (169 aa). A helical; Signal-anchor for type II membrane protein transmembrane segment spans residues 18-39; sequence AVLFLLFIFCLFSVFISAYYLY. The segment at 40–598 is heparan sulfate N-deacetylase 1; sequence GWKRGLEPSA…KRHKDIWSKE (559 aa). The Lumenal portion of the chain corresponds to 40-882; the sequence is GWKRGLEPSA…WLREDLQNTR (843 aa). Residues asparagine 231, asparagine 351, and asparagine 401 are each glycosylated (N-linked (GlcNAc...) asparagine). The segment at 599–882 is heparan sulfate N-sulfotransferase 1; the sequence is KTCDRFPKLL…WLREDLQNTR (284 aa). Lysine 614 serves as the catalytic For sulfotransferase activity. An adenosine 3',5'-bisphosphate-binding site is contributed by 614–618; that stretch reads KTGTT. Asparagine 667 carries an N-linked (GlcNAc...) asparagine glycan. 2 residues coordinate adenosine 3',5'-bisphosphate: serine 712 and tryptophan 817. A disulfide bridge links cysteine 818 with cysteine 828. 833-837 is a binding site for adenosine 3',5'-bisphosphate; it reads KGRKY.

The protein belongs to the sulfotransferase 1 family. NDST subfamily. Monomer. In terms of assembly, interacts with heparan sulfate co-polymerase subunits EXT1 and EXT2. Interacts with NDST1 isoform 3. As to quaternary structure, interacts with heparan sulfate co-polymerase subunits EXT1 and EXT2. Interacts with NDST1 isoform 1. In terms of tissue distribution, widely expressed. Expression is most abundant in heart, liver and pancreas.

Its subcellular location is the golgi apparatus. It is found in the trans-Golgi network membrane. It localises to the cis-Golgi network membrane. It carries out the reaction N-acetyl-alpha-D-glucosaminyl-[heparan sulfate](n) + H2O = alpha-D-glucosaminyl-[heparan sulfate](n) + acetate. The catalysed reaction is alpha-D-glucosaminyl-[heparan sulfate](n) + 3'-phosphoadenylyl sulfate = N-sulfo-alpha-D-glucosaminyl-[heparan sulfate](n) + adenosine 3',5'-bisphosphate + 2 H(+). It functions in the pathway glycan metabolism; heparan sulfate biosynthesis. It participates in glycan metabolism; heparin biosynthesis. In terms of biological role, essential bifunctional enzyme that catalyzes both the N-deacetylation and the N-sulfation of glucosamine (GlcNAc) of the glycosaminoglycan in heparan sulfate. Modifies the GlcNAc-GlcA disaccharide repeating sugar backbone to make N-sulfated heparosan, a prerequisite substrate for later modifications in heparin biosynthesis. Plays a role in determining the extent and pattern of sulfation of heparan sulfate. Participates in biosynthesis of heparan sulfate that can ultimately serve as L-selectin ligands, thereby playing a role in inflammatory response. Required for the exosomal release of SDCBP, CD63 and syndecan. Lacks both N-deacetylase and N-sulfotransferase activities. Acts as a dominant negative on isoform 1, likely by changing the composition of enzyme complexes responsible for elongation and modification of heparan sulfates. This is Bifunctional heparan sulfate N-deacetylase/N-sulfotransferase 1 from Homo sapiens (Human).